Consider the following 146-residue polypeptide: Transcriptional regulator MraZ (146 aa).

SpoVT-AbrB domains follow at residues 5–48 (TSYH…TLEE) and 77–120 (ASEC…SRAK).

The protein belongs to the MraZ family. Forms oligomers.

It localises to the cytoplasm. The protein localises to the nucleoid. This Desulfosudis oleivorans (strain DSM 6200 / JCM 39069 / Hxd3) (Desulfococcus oleovorans) protein is Transcriptional regulator MraZ.